Reading from the N-terminus, the 287-residue chain is Leucine-rich repeat-containing protein 72 (287 aa).

4 LRR repeats span residues 46–67 (DVFELFLSKKELTEVIDLSRFK), 68–89 (KLKYLWLHHNKLHGITFLTRNY), 90–111 (CLTELYLNNNAIFEIEGLHYLP), and 112–133 (SLHILLLHHNELTNIDATVKEL). Residues 147–185 (NPLCQYNLYRLYIIYHLPGVELLDRNQVTEKERRSMITI) form the LRRCT domain.

The chain is Leucine-rich repeat-containing protein 72 (LRRC72) from Homo sapiens (Human).